A 266-amino-acid chain; its full sequence is Small ribosomal subunit protein uS2 (266 aa).

The tract at residues 227–266 (GVSFTEETPSEPIQSDSSEEEEGSLDISDLFEDTDLKEEE) is disordered. Residues 231-240 (TEETPSEPIQ) are compositionally biased toward polar residues. The span at 243 to 266 (SSEEEEGSLDISDLFEDTDLKEEE) shows a compositional bias: acidic residues.

Belongs to the universal ribosomal protein uS2 family.

This is Small ribosomal subunit protein uS2 from Pseudothermotoga lettingae (strain ATCC BAA-301 / DSM 14385 / NBRC 107922 / TMO) (Thermotoga lettingae).